The sequence spans 399 residues: Nicotinate phosphoribosyltransferase (399 aa).

Position 217 is a phosphohistidine; by autocatalysis (H217).

This sequence belongs to the NAPRTase family. Transiently phosphorylated on a His residue during the reaction cycle. Phosphorylation strongly increases the affinity for substrates and increases the rate of nicotinate D-ribonucleotide production. Dephosphorylation regenerates the low-affinity form of the enzyme, leading to product release.

It catalyses the reaction nicotinate + 5-phospho-alpha-D-ribose 1-diphosphate + ATP + H2O = nicotinate beta-D-ribonucleotide + ADP + phosphate + diphosphate. Its pathway is cofactor biosynthesis; NAD(+) biosynthesis; nicotinate D-ribonucleotide from nicotinate: step 1/1. Catalyzes the synthesis of beta-nicotinate D-ribonucleotide from nicotinate and 5-phospho-D-ribose 1-phosphate at the expense of ATP. This chain is Nicotinate phosphoribosyltransferase, found in Burkholderia orbicola (strain MC0-3).